We begin with the raw amino-acid sequence, 226 residues long: 7-cyano-7-deazaguanine synthase (226 aa).

7-17 (ISGGMDSLVVA) is an ATP binding site. Residues Cys-187, Cys-195, Cys-198, and Cys-201 each coordinate Zn(2+).

The protein belongs to the QueC family. Zn(2+) is required as a cofactor.

The catalysed reaction is 7-carboxy-7-deazaguanine + NH4(+) + ATP = 7-cyano-7-deazaguanine + ADP + phosphate + H2O + H(+). It functions in the pathway purine metabolism; 7-cyano-7-deazaguanine biosynthesis. Its function is as follows. Catalyzes the ATP-dependent conversion of 7-carboxy-7-deazaguanine (CDG) to 7-cyano-7-deazaguanine (preQ(0)). In Chlorobium phaeobacteroides (strain BS1), this protein is 7-cyano-7-deazaguanine synthase.